Reading from the N-terminus, the 427-residue chain is MMDKIIVKGGQTKLQGEVEIEGAKNAVLPLLAATLLASEGEVVLTNVPILSDVFMMNNLVNHLGTAISFDQEAKKIIAKSNSEIKTTAPYEYVSKMRASIVVMGPILARNGQARVSMPGGCSIGSRPIDLHLRGFEQMGATITQNAGYIEAKADKLKGAHIYLDFPSVGATQNLILAATLADGTTTLENAAREPEIVDLANLLNKMGANVKGAGTDTIIIKGVEKMHGANHSVVQDRIEAGTFMVAAAMTQGDVLIKDAIAEHNRPLISKLSEMGVNFIQEESGLRVVGPEKLKATSVKTLPHPGFPTDMQSQMTAAQAVAVGESVMVETVFENRFQHLKEMRRIGLEVDITRNTALIQGNSNLQGAAVKSTDLRASAALILLGLVAKGQTTVRRLSHLDRGYYKFHEKLKALGADIIRVEDEDGEG.

24 to 25 (KN) is a phosphoenolpyruvate binding site. UDP-N-acetyl-alpha-D-glucosamine is bound at residue Arg97. The Proton donor role is filled by Cys121. Cys121 carries the 2-(S-cysteinyl)pyruvic acid O-phosphothioketal modification. UDP-N-acetyl-alpha-D-glucosamine-binding positions include 126–130 (RPIDL), Asp309, and Val331.

This sequence belongs to the EPSP synthase family. MurA subfamily.

The protein resides in the cytoplasm. The catalysed reaction is phosphoenolpyruvate + UDP-N-acetyl-alpha-D-glucosamine = UDP-N-acetyl-3-O-(1-carboxyvinyl)-alpha-D-glucosamine + phosphate. It functions in the pathway cell wall biogenesis; peptidoglycan biosynthesis. Its function is as follows. Cell wall formation. Adds enolpyruvyl to UDP-N-acetylglucosamine. The sequence is that of UDP-N-acetylglucosamine 1-carboxyvinyltransferase 1 from Lactococcus lactis subsp. lactis (strain IL1403) (Streptococcus lactis).